Here is a 612-residue protein sequence, read N- to C-terminus: UvrABC system protein C (612 aa).

The region spanning 21-99 is the GIY-YIG domain; sequence KLPGVYQMYD…IKSQKPPFNI (79 aa). The region spanning 209-244 is the UVR domain; that stretch reads EVLQQELQVEMEQASQALDFERAVVVRDQITDLRQV.

It belongs to the UvrC family. Interacts with UvrB in an incision complex.

It is found in the cytoplasm. Its function is as follows. The UvrABC repair system catalyzes the recognition and processing of DNA lesions. UvrC both incises the 5' and 3' sides of the lesion. The N-terminal half is responsible for the 3' incision and the C-terminal half is responsible for the 5' incision. In Saccharophagus degradans (strain 2-40 / ATCC 43961 / DSM 17024), this protein is UvrABC system protein C.